A 600-amino-acid polypeptide reads, in one-letter code: Long-chain-fatty-acid--CoA ligase FadD15 (600 aa).

The protein belongs to the ATP-dependent AMP-binding enzyme family.

The enzyme catalyses a long-chain fatty acid + ATP + CoA = a long-chain fatty acyl-CoA + AMP + diphosphate. It functions in the pathway lipid metabolism; fatty acid biosynthesis. Functionally, catalyzes the activation of long-chain fatty acids as acyl-coenzyme A (acyl-CoA), which are then transferred to the multifunctional polyketide synthase (PKS) type III for further chain extension. The protein is Long-chain-fatty-acid--CoA ligase FadD15 (fadD15) of Mycobacterium bovis (strain ATCC BAA-935 / AF2122/97).